The primary structure comprises 598 residues: Aspartate--tRNA(Asp/Asn) ligase (598 aa).

Glutamate 172 provides a ligand contact to L-aspartate. Residues 196 to 199 (QLFK) are aspartate. Arginine 218 provides a ligand contact to L-aspartate. Residues 218–220 (RDE) and glutamine 227 each bind ATP. Residue histidine 454 participates in L-aspartate binding. Glutamate 488 provides a ligand contact to ATP. Position 495 (arginine 495) interacts with L-aspartate. Residue 540-543 (GLDR) participates in ATP binding.

It belongs to the class-II aminoacyl-tRNA synthetase family. Type 1 subfamily. Homodimer.

The protein resides in the cytoplasm. The catalysed reaction is tRNA(Asx) + L-aspartate + ATP = L-aspartyl-tRNA(Asx) + AMP + diphosphate. Functionally, aspartyl-tRNA synthetase with relaxed tRNA specificity since it is able to aspartylate not only its cognate tRNA(Asp) but also tRNA(Asn). Reaction proceeds in two steps: L-aspartate is first activated by ATP to form Asp-AMP and then transferred to the acceptor end of tRNA(Asp/Asn). The sequence is that of Aspartate--tRNA(Asp/Asn) ligase from Leptothrix cholodnii (strain ATCC 51168 / LMG 8142 / SP-6) (Leptothrix discophora (strain SP-6)).